Here is a 750-residue protein sequence, read N- to C-terminus: Penicillin-binding protein 2x (750 aa).

Residues 29–49 (LSLLSVFVFAIFLVNFAVIIG) traverse the membrane as a helical segment. Residue serine 337 is the Acyl-ester intermediate of the active site. PASTA domains follow at residues 632–691 (QQSP…ILSD) and 692–750 (KAEE…TLGD).

The protein belongs to the transpeptidase family.

It localises to the cell membrane. In terms of biological role, a transpeptidase that forms peptide cross-links between adjacent glycan strands in cell wall peptidoglycan (PG). Part of the divisome machinery that synthesizes the septal cross wall. Beta-lactams inactivate the PBPs by acylating an essential serine residue in the active site of these proteins. This chain is Penicillin-binding protein 2x (pbpX), found in Streptococcus pneumoniae serotype 4 (strain ATCC BAA-334 / TIGR4).